A 380-amino-acid chain; its full sequence is Ribosomal RNA large subunit methyltransferase F (380 aa).

Disordered stretches follow at residues 1 to 54 (MSHK…PRNA) and 260 to 279 (SQVM…ATDK). Positions 21 to 32 (QRQVVSKSSLQK) are enriched in low complexity. The span at 44 to 53 (QKSKALHPRN) shows a compositional bias: basic residues. Residues 260 to 270 (SQVMSPQVQPS) show a composition bias toward low complexity.

The protein belongs to the methyltransferase superfamily. METTL16/RlmF family.

It is found in the cytoplasm. The catalysed reaction is adenosine(1618) in 23S rRNA + S-adenosyl-L-methionine = N(6)-methyladenosine(1618) in 23S rRNA + S-adenosyl-L-homocysteine + H(+). Its function is as follows. Specifically methylates the adenine in position 1618 of 23S rRNA. This is Ribosomal RNA large subunit methyltransferase F from Shewanella pealeana (strain ATCC 700345 / ANG-SQ1).